A 153-amino-acid polypeptide reads, in one-letter code: Large ribosomal subunit protein uL15 (153 aa).

This sequence belongs to the universal ribosomal protein uL15 family. In terms of assembly, part of the 50S ribosomal subunit.

In terms of biological role, binds to the 23S rRNA. This chain is Large ribosomal subunit protein uL15, found in Pelagibacter ubique (strain HTCC1062).